The chain runs to 208 residues: Small ribosomal subunit protein uS4 (208 aa).

The S4 RNA-binding domain occupies 98–158; sequence RRLDNVVYRL…EKSRKIACIN (61 aa).

It belongs to the universal ribosomal protein uS4 family. Part of the 30S ribosomal subunit. Contacts protein S5. The interaction surface between S4 and S5 is involved in control of translational fidelity.

In terms of biological role, one of the primary rRNA binding proteins, it binds directly to 16S rRNA where it nucleates assembly of the body of the 30S subunit. With S5 and S12 plays an important role in translational accuracy. The polypeptide is Small ribosomal subunit protein uS4 (Geobacter metallireducens (strain ATCC 53774 / DSM 7210 / GS-15)).